We begin with the raw amino-acid sequence, 136 residues long: UPF0216 protein PYRAB16100 (136 aa).

The protein belongs to the UPF0216 family.

This chain is UPF0216 protein PYRAB16100, found in Pyrococcus abyssi (strain GE5 / Orsay).